A 452-amino-acid polypeptide reads, in one-letter code: Trigger factor (452 aa).

Residues 171–256 (GDRVTVSFKG…ATKLEAPQET (86 aa)) enclose the PPIase FKBP-type domain.

This sequence belongs to the FKBP-type PPIase family. Tig subfamily.

It localises to the cytoplasm. It catalyses the reaction [protein]-peptidylproline (omega=180) = [protein]-peptidylproline (omega=0). Involved in protein export. Acts as a chaperone by maintaining the newly synthesized protein in an open conformation. Functions as a peptidyl-prolyl cis-trans isomerase. The chain is Trigger factor from Rhodopseudomonas palustris (strain ATCC BAA-98 / CGA009).